Reading from the N-terminus, the 186-residue chain is Ribosome-recycling factor (186 aa).

It belongs to the RRF family.

The protein resides in the cytoplasm. Functionally, responsible for the release of ribosomes from messenger RNA at the termination of protein biosynthesis. May increase the efficiency of translation by recycling ribosomes from one round of translation to another. This chain is Ribosome-recycling factor, found in Bordetella petrii (strain ATCC BAA-461 / DSM 12804 / CCUG 43448).